The following is a 419-amino-acid chain: Dynein regulatory complex protein 9 (419 aa).

Disordered regions lie at residues 25 to 45 (TGEP…EETS) and 394 to 419 (NFKM…RRKK). Positions 30–45 (EAAEEDLDYEEEEETS) are enriched in acidic residues. Residues 372–401 (ELRSIVKLQAWWRGSVVRKEIGNFKMPKKD) form the IQ domain. A compositionally biased stretch (basic and acidic residues) spans 394 to 413 (NFKMPKKDKDDSKDSKGKEK).

This sequence belongs to the DRC9 family. Component of the nexin-dynein regulatory complex (N-DRC). Interacts (via IQ domain) with CALM when calcium levels are low. Does not interact with CALM in the presence of Ca(2+). Interacts with the HSP70 proteins HSPA1L and HSPA8. May form a complex with CAMK4 and HSP70. As to expression, expressed in the testes (at protein level). Also detected in oviduct (at protein level). Also detected in the trachea.

The protein resides in the cytoplasm. Its subcellular location is the cell projection. It is found in the cilium. It localises to the flagellum. The protein localises to the cytoskeleton. The protein resides in the flagellum axoneme. Functionally, component of the nexin-dynein regulatory complex (N-DRC), a key regulator of ciliary/flagellar motility which maintains the alignment and integrity of the distal axoneme and regulates microtubule sliding in motile axonemes. Binds calmodulin when cellular Ca(2+) levels are low and thereby contributes to the regulation of calcium and calmodulin-dependent protein kinase IV (CAMK4) activity; contributes to the regulation of CAMK4 signaling cascades. Required for normal axoneme assembly in sperm flagella, normal sperm tail formation and for male fertility. This chain is Dynein regulatory complex protein 9 (Iqcg), found in Mus musculus (Mouse).